We begin with the raw amino-acid sequence, 371 residues long: Epoxyqueuosine reductase (371 aa).

D137 serves as the catalytic Proton donor. The 4Fe-4S ferredoxin-type domain maps to 179 to 211 (IPLPVDTPVENQCGKCTACISSCPTNAILENGV). Residues C191, C194, C197, C201, C217, C244, C247, and C251 each coordinate [4Fe-4S] cluster.

This sequence belongs to the QueG family. As to quaternary structure, monomer. Cob(II)alamin is required as a cofactor. It depends on [4Fe-4S] cluster as a cofactor.

The protein resides in the cytoplasm. It catalyses the reaction epoxyqueuosine(34) in tRNA + AH2 = queuosine(34) in tRNA + A + H2O. The protein operates within tRNA modification; tRNA-queuosine biosynthesis. Its function is as follows. Catalyzes the conversion of epoxyqueuosine (oQ) to queuosine (Q), which is a hypermodified base found in the wobble positions of tRNA(Asp), tRNA(Asn), tRNA(His) and tRNA(Tyr). This Aliivibrio fischeri (strain ATCC 700601 / ES114) (Vibrio fischeri) protein is Epoxyqueuosine reductase.